A 171-amino-acid polypeptide reads, in one-letter code: uncharacterized protein (171 aa).

It belongs to the transferase hexapeptide repeat family.

This is an uncharacterized protein from Bacillus subtilis (strain 168).